The primary structure comprises 291 residues: Urease accessory protein UreD (291 aa).

This sequence belongs to the UreD family. As to quaternary structure, ureD, UreF and UreG form a complex that acts as a GTP-hydrolysis-dependent molecular chaperone, activating the urease apoprotein by helping to assemble the nickel containing metallocenter of UreC. The UreE protein probably delivers the nickel.

It is found in the cytoplasm. Functionally, required for maturation of urease via the functional incorporation of the urease nickel metallocenter. This Acinetobacter baumannii (strain ACICU) protein is Urease accessory protein UreD.